The following is a 238-amino-acid chain: Ribonuclease PH (238 aa).

Phosphate is bound by residues Arg86 and 124-126 (GTR).

Belongs to the RNase PH family. As to quaternary structure, homohexameric ring arranged as a trimer of dimers.

It carries out the reaction tRNA(n+1) + phosphate = tRNA(n) + a ribonucleoside 5'-diphosphate. Phosphorolytic 3'-5' exoribonuclease that plays an important role in tRNA 3'-end maturation. Removes nucleotide residues following the 3'-CCA terminus of tRNAs; can also add nucleotides to the ends of RNA molecules by using nucleoside diphosphates as substrates, but this may not be physiologically important. Probably plays a role in initiation of 16S rRNA degradation (leading to ribosome degradation) during starvation. The chain is Ribonuclease PH from Phenylobacterium zucineum (strain HLK1).